Consider the following 130-residue polypeptide: Glycine cleavage system H protein (130 aa).

The region spanning Ile23 to Glu105 is the Lipoyl-binding domain. Lys64 carries the N6-lipoyllysine modification.

Belongs to the GcvH family. In terms of assembly, the glycine cleavage system is composed of four proteins: P, T, L and H. Requires (R)-lipoate as cofactor.

Its function is as follows. The glycine cleavage system catalyzes the degradation of glycine. The H protein shuttles the methylamine group of glycine from the P protein to the T protein. In Carboxydothermus hydrogenoformans (strain ATCC BAA-161 / DSM 6008 / Z-2901), this protein is Glycine cleavage system H protein.